We begin with the raw amino-acid sequence, 309 residues long: 4-diphosphocytidyl-2-C-methyl-D-erythritol kinase (309 aa).

K28 is an active-site residue. ATP is bound at residue 120-130 (PSQAGMGGGSS). Residue D162 is part of the active site.

It belongs to the GHMP kinase family. IspE subfamily.

It catalyses the reaction 4-CDP-2-C-methyl-D-erythritol + ATP = 4-CDP-2-C-methyl-D-erythritol 2-phosphate + ADP + H(+). It functions in the pathway isoprenoid biosynthesis; isopentenyl diphosphate biosynthesis via DXP pathway; isopentenyl diphosphate from 1-deoxy-D-xylulose 5-phosphate: step 3/6. Its function is as follows. Catalyzes the phosphorylation of the position 2 hydroxy group of 4-diphosphocytidyl-2C-methyl-D-erythritol. The protein is 4-diphosphocytidyl-2-C-methyl-D-erythritol kinase of Polaromonas sp. (strain JS666 / ATCC BAA-500).